Reading from the N-terminus, the 187-residue chain is Aminodeoxychorismate synthase component 2 (187 aa).

The 187-residue stretch at 1-187 folds into the Glutamine amidotransferase type-1 domain; it reads MILLIDNYDS…HQLLANFLNR (187 aa). Catalysis depends on residues Cys-79, His-168, and Glu-170.

Monomer. Heterodimer consisting of two non-identical subunits: a glutamine amidotransferase subunit (PabA) and a aminodeoxychorismate synthase subunit (PabB).

The catalysed reaction is chorismate + L-glutamine = 4-amino-4-deoxychorismate + L-glutamate. Its pathway is cofactor biosynthesis; tetrahydrofolate biosynthesis; 4-aminobenzoate from chorismate: step 1/2. Its function is as follows. Part of a heterodimeric complex that catalyzes the two-step biosynthesis of 4-amino-4-deoxychorismate (ADC), a precursor of p-aminobenzoate (PABA) and tetrahydrofolate. In the first step, a glutamine amidotransferase (PabA) generates ammonia as a substrate that, along with chorismate, is used in the second step, catalyzed by aminodeoxychorismate synthase (PabB) to produce ADC. PabA converts glutamine into glutamate only in the presence of stoichiometric amounts of PabB. The protein is Aminodeoxychorismate synthase component 2 (pabA) of Klebsiella aerogenes (Enterobacter aerogenes).